The sequence spans 287 residues: Large ribosomal subunit protein uL2 (287 aa).

Residues 203-287 form a disordered region; sequence LSAGKAGRNR…SKRGRGGRES (85 aa). Basic residues-rich tracts occupy residues 209–220 and 258–287; these read GRNRWKGRRPKV and KTRK…GRES.

The protein belongs to the universal ribosomal protein uL2 family. As to quaternary structure, part of the 50S ribosomal subunit. Forms a bridge to the 30S subunit in the 70S ribosome.

Its function is as follows. One of the primary rRNA binding proteins. Required for association of the 30S and 50S subunits to form the 70S ribosome, for tRNA binding and peptide bond formation. It has been suggested to have peptidyltransferase activity; this is somewhat controversial. Makes several contacts with the 16S rRNA in the 70S ribosome. In Nostoc sp. (strain PCC 7120 / SAG 25.82 / UTEX 2576), this protein is Large ribosomal subunit protein uL2.